The primary structure comprises 913 residues: MEGPEIKAVEAVIDNGSFGKRTLRFETGRLAQQADGAVAAYLDDDSMILSTTTAGSSPKENYDFFPLTVDVEEKMYAAGKIPGSFFRREGRPSSEAILACRIIDRPLRPLFPHTLRNEVQVVETVLAVNPDDAYDVIALNAASASTMISGLPFEGPVSGVRLALIDGQWVAFPRWSERERAVFEIVVAGRVIENGDVAIAMIEAGAGKNAWHLIYDEGQTKPDEEVVAGGLEAAKPFIKVICEAQDELKKIAAKETKEFQLFPEYTDELYARIDEIAHKDLDEALSIAEKLPRQDRIHEIKEHVREVLADEFTDMDDAEKDKELGNAFKELQRQIVRRRILTEDYRIDGRGLRDIRTLSAEVDIVPRVHGSALFQRGETQILGVTTLNMLKMEQQIDALSGPQSKRYMHNYEMPPYSTGETGRVGSPKRREIGHGALAEKALVPVLPSREEFPYAIRQVSEAIGSNGSTSMGSVCASTLSLLAAGVPLKAPVAGIAMGLVSGDVDGKHIFKTLTDILGAEDAFGDMDFKVAGTSEFITALQLDTKLDGIPADILAAALQQAKEARATILEVINECIDGPAEMSEFAPRIITTSVPVEKIGEVIGPKGKMINQIQEDTGAEIAIEDDGTVFISSEGGEAAEKAKAIIDQIANPHVPEAGETYNGKVVKTTSFGAFVNLTPGTDGLLHISQIRNLANGERIDAVEDVLKEGDTVEVIVQGVDDRGKISLAIPGFEDQENNARPSRGDRDDRRGGRGRGDRDDRRGGRGRRSERDDRDFDDRDDRPRRRRSDDFEDDYDDRPRRRRSDDRDFDRDDRDDDRPRRRRSADRDFDDRDDRDARDSRDDDRPRRRRSSDRDDRGDRDDRRGGSRGRGRGSDRNPRYATDDNYDDYRADREERTERPRRRVRRDFDPFED.

The interval Y407–P427 is disordered. Positions 521 and 527 each coordinate Mg(2+). One can recognise a KH domain in the interval P587–I646. The S1 motif domain occupies G658 to P730. The tract at residues L727–D913 is disordered. Composition is skewed to basic and acidic residues over residues S742–D789, D797–G865, and R872–E898.

Belongs to the polyribonucleotide nucleotidyltransferase family. Mg(2+) serves as cofactor.

The protein resides in the cytoplasm. The enzyme catalyses RNA(n+1) + phosphate = RNA(n) + a ribonucleoside 5'-diphosphate. Involved in mRNA degradation. Catalyzes the phosphorolysis of single-stranded polyribonucleotides processively in the 3'- to 5'-direction. This chain is Polyribonucleotide nucleotidyltransferase, found in Bifidobacterium longum (strain DJO10A).